Here is a 129-residue protein sequence, read N- to C-terminus: L-ectoine synthase (129 aa).

Belongs to the ectoine synthase family.

The catalysed reaction is (2S)-4-acetamido-2-aminobutanoate = L-ectoine + H2O. The protein operates within amine and polyamine biosynthesis; ectoine biosynthesis; L-ectoine from L-aspartate 4-semialdehyde: step 3/3. Functionally, catalyzes the circularization of gamma-N-acetyl-alpha,gamma-diaminobutyric acid (ADABA) to ectoine (1,4,5,6-tetrahydro-2-methyl-4-pyrimidine carboxylic acid), which is an excellent osmoprotectant. The sequence is that of L-ectoine synthase from Marinomonas sp. (strain MWYL1).